The primary structure comprises 790 residues: Penicillin-binding protein 1A (790 aa).

At 1–20 the chain is on the cytoplasmic side; that stretch reads MANVRKRRKKKNEHKALRLT. A helical; Signal-anchor for type II membrane protein membrane pass occupies residues 21 to 41; that stretch reads FITLLMVFLFSCVAAAGVGLA. Residues 42 to 790 are Extracellular-facing; sequence MIKAAPPLDV…RKRKMIKPQI (749 aa). The transglycosylase stretch occupies residues 61–230; the sequence is SVIYDDKNKL…PQSPSTFYNA (170 aa). Catalysis depends on E100, which acts as the Proton donor; for transglycosylase activity. The segment at 363-656 is transpeptidase; the sequence is ASVSIVDYKT…AALIWKLIMG (294 aa). S402 functions as the Acyl-ester intermediate; for transpeptidase activity in the catalytic mechanism. The segment at 720–790 is disordered; sequence NKDKDDDDDD…RKRKMIKPQI (71 aa). The span at 724–740 shows a compositional bias: acidic residues; it reads DDDDDDKDKDKEDEEEN. A compositionally biased stretch (basic and acidic residues) spans 741–779; sequence KDEKNEDKKEAKDNTKNKDKDKKKDNDRKIDMDKKPDSS. The span at 780–790 shows a compositional bias: basic residues; the sequence is KRKRKMIKPQI.

This sequence in the N-terminal section; belongs to the glycosyltransferase 51 family. It in the C-terminal section; belongs to the transpeptidase family.

It is found in the cell membrane. The catalysed reaction is [GlcNAc-(1-&gt;4)-Mur2Ac(oyl-L-Ala-gamma-D-Glu-L-Lys-D-Ala-D-Ala)](n)-di-trans,octa-cis-undecaprenyl diphosphate + beta-D-GlcNAc-(1-&gt;4)-Mur2Ac(oyl-L-Ala-gamma-D-Glu-L-Lys-D-Ala-D-Ala)-di-trans,octa-cis-undecaprenyl diphosphate = [GlcNAc-(1-&gt;4)-Mur2Ac(oyl-L-Ala-gamma-D-Glu-L-Lys-D-Ala-D-Ala)](n+1)-di-trans,octa-cis-undecaprenyl diphosphate + di-trans,octa-cis-undecaprenyl diphosphate + H(+). It catalyses the reaction Preferential cleavage: (Ac)2-L-Lys-D-Ala-|-D-Ala. Also transpeptidation of peptidyl-alanyl moieties that are N-acyl substituents of D-alanine.. Its pathway is cell wall biogenesis; peptidoglycan biosynthesis. Its function is as follows. Cell wall formation. Synthesis of cross-linked peptidoglycan from the lipid intermediates. The enzyme has a penicillin-insensitive transglycosylase N-terminal domain (formation of linear glycan strands) and a penicillin-sensitive transpeptidase C-terminal domain (cross-linking of the peptide subunits). The polypeptide is Penicillin-binding protein 1A (pbpA) (Clostridium tetani (strain Massachusetts / E88)).